Reading from the N-terminus, the 184-residue chain is Rubrerythrin-2 (184 aa).

One can recognise a Ferritin-like diiron domain in the interval 2–146; that stretch reads SVKNAMTADF…DAQDSAKENK (145 aa). Fe(3+) is bound by residues Glu-19, Glu-52, Glu-94, Glu-97, Glu-128, His-131, Cys-156, Cys-159, Cys-171, and Cys-174. Residues 151–184 form the Rubredoxin-like domain; the sequence is GKVYICPVCGFTTLDENIEQCPICGVKKDKFQAF.

Requires Fe(3+) as cofactor.

The enzyme catalyses H2O2 + NADH + H(+) = NAD(+) + 2 H2O. With respect to regulation, rubredoxin (Rd) increases the NADH consumption rate by serving as an intermediary electron-transfer shuttle between NROR and Rbr2. Its function is as follows. Functions as the terminal component of an NADH peroxidase (NADH:H(2)O(2) oxidoreductase) when using NADH:rubredoxin oxidoreductase (NROR) as the electron transport intermediary from NADH to Rbr2. This chain is Rubrerythrin-2 (rbr2), found in Clostridium acetobutylicum (strain ATCC 824 / DSM 792 / JCM 1419 / IAM 19013 / LMG 5710 / NBRC 13948 / NRRL B-527 / VKM B-1787 / 2291 / W).